We begin with the raw amino-acid sequence, 329 residues long: Phenylalanine--tRNA ligase alpha subunit (329 aa).

It belongs to the class-II aminoacyl-tRNA synthetase family. Phe-tRNA synthetase alpha subunit type 1 subfamily. Tetramer of two alpha and two beta subunits. It depends on Mg(2+) as a cofactor.

The protein resides in the cytoplasm. The enzyme catalyses tRNA(Phe) + L-phenylalanine + ATP = L-phenylalanyl-tRNA(Phe) + AMP + diphosphate + H(+). In Buchnera aphidicola subsp. Acyrthosiphon pisum (strain APS) (Acyrthosiphon pisum symbiotic bacterium), this protein is Phenylalanine--tRNA ligase alpha subunit (pheS).